Consider the following 388-residue polypeptide: Trans-enoyl reductase tenC (388 aa).

51 to 54 (VDGK) provides a ligand contact to NADP(+). Residue 142–149 (VGVASVGM) coordinates substrate. Residues 219–222 (SSES), tyrosine 237, and 284–285 (LD) each bind NADP(+). 304–308 (SFTQF) serves as a coordination point for substrate. Residue 373 to 374 (IK) participates in NADP(+) binding.

This sequence belongs to the zinc-containing alcohol dehydrogenase family. As to quaternary structure, monomer.

Its pathway is secondary metabolite biosynthesis. Its function is as follows. Trans-enoyl reductase; part of the gene cluster that mediates the biosynthesis of tenellin-type 2-pyridones, iron-chelating compounds involved in iron stress tolerance, competition with the natural competitor fungus Metarhizium robertsii and insect hosts infection. TenC collaborates with the hybrid PKS-NRPS synthetase tenS to catalyze the assembly of the polyketide-amino acid backbone, since tenS lacks a designated enoylreductase (ER) domain. Upon formation of the polyketide backbone on the thiotemplate of tenS, the triketide is transferred to the NRPS module and linked to tyrosine to produce the pyrrolidine-2-dione intermediates, including pretellinin A, 11-hydropretellenin A, 12-hydropretellenin A, 13-hydropretellenin A, 14-hydropretellenin A, 12-oxopretellenin A and prototellinin D. The pathway begins with the assembly of the polyketide-amino acid backbone by the hybrid PKS-NRPS tenS with the help of the enoyl reductase tenC. These enzymes catalyze the synthesis of the pyrrolidine-2-dione intermediates pretellinin A, 11-hydropretellenin A, 12-hydropretellenin A, 13-hydropretellenin A, 14-hydropretellenin A, 12-oxopretellenin A and prototellinin D. The cytochrome P450 monooxygenase tenA then catalyzes an oxidative ring expansion of pretenellin A and 14-hydropretellenin A to form the 2-pyridone core, leading to pretenellin B and pyridovericin, respectively. The cytochrome P450 monooxygenase tenB is then required for the selective N-hydroxylation of the 2-pyridone nitrogen of yield tellinin and 15-hydroxytellenin (15-HT), respectively. The UDP-glucosyltransferase GT1 and the methyltransferase MT1, located outside the tenS gene cluster, contribute to the stepwise glycosylation and methylation of 15-HT to obtain the glycoside pyridovericin-N-O-(4-O-methyl-beta-D-glucopyranoside) (PMGP). Additional related compounds such as 1-O-methyl-15-HT, (8Z)-1-O-methyl-15-HT, and O-methyltenellin A are also produced but the enzymes involved in their biosynthesis have still to be determined. This Beauveria bassiana (White muscardine disease fungus) protein is Trans-enoyl reductase tenC.